A 518-amino-acid chain; its full sequence is ATP synthase subunit alpha (518 aa).

Position 169–176 (169–176 (GDRKTGKT)) interacts with ATP.

This sequence belongs to the ATPase alpha/beta chains family. F-type ATPases have 2 components, CF(1) - the catalytic core - and CF(0) - the membrane proton channel. CF(1) has five subunits: alpha(3), beta(3), gamma(1), delta(1), epsilon(1). CF(0) has three main subunits: a(1), b(2) and c(9-12). The alpha and beta chains form an alternating ring which encloses part of the gamma chain. CF(1) is attached to CF(0) by a central stalk formed by the gamma and epsilon chains, while a peripheral stalk is formed by the delta and b chains.

The protein localises to the cell membrane. It catalyses the reaction ATP + H2O + 4 H(+)(in) = ADP + phosphate + 5 H(+)(out). In terms of biological role, produces ATP from ADP in the presence of a proton gradient across the membrane. The alpha chain is a regulatory subunit. This chain is ATP synthase subunit alpha, found in Enterococcus faecalis (strain ATCC 700802 / V583).